A 485-amino-acid polypeptide reads, in one-letter code: Glutamate--tRNA ligase (485 aa).

A 'HIGH' region motif is present at residues 11 to 21; that stretch reads PSPTGLLHIGN. A 'KMSKS' region motif is present at residues 255–259; it reads KLSKR. K258 lines the ATP pocket.

The protein belongs to the class-I aminoacyl-tRNA synthetase family. Glutamate--tRNA ligase type 1 subfamily. As to quaternary structure, monomer.

The protein localises to the cytoplasm. The enzyme catalyses tRNA(Glu) + L-glutamate + ATP = L-glutamyl-tRNA(Glu) + AMP + diphosphate. In terms of biological role, catalyzes the attachment of glutamate to tRNA(Glu) in a two-step reaction: glutamate is first activated by ATP to form Glu-AMP and then transferred to the acceptor end of tRNA(Glu). The sequence is that of Glutamate--tRNA ligase from Streptococcus sanguinis (strain SK36).